The primary structure comprises 627 residues: Serine/threonine-protein phosphatase 2A 56 kDa regulatory subunit delta 2 isoform (627 aa).

The interval 1–37 is disordered; sequence MKGLRSKFVKALSLKDEQGSHKNGHSKSHYISKNGSY.

The protein belongs to the phosphatase 2A regulatory subunit B family. In terms of assembly, PP2A consists of a common heterodimeric core enzyme, composed of a 36 kDa catalytic subunit (subunit C) and a 65 kDa constant regulatory subunit (PR65 or subunit A), that associates with a variety of regulatory subunits. Proteins that associate with the core dimer include three families of regulatory subunits B (the R2/B/PR55/B55, R3/B''/PR72/PR130/PR59 and R5/B'/B56 families), the 48 kDa variable regulatory subunit, viral proteins, and cell signaling molecules.

The protein resides in the cytoplasm. It localises to the cell tip. The B regulatory subunit might modulate substrate selectivity and catalytic activity, and might also direct the localization of the catalytic enzyme to a particular subcellular compartment. Has a role in cell shape control and septum formation. This is Serine/threonine-protein phosphatase 2A 56 kDa regulatory subunit delta 2 isoform (par2) from Schizosaccharomyces pombe (strain 972 / ATCC 24843) (Fission yeast).